The primary structure comprises 866 residues: Dimethylglycine dehydrogenase, mitochondrial (866 aa).

A mitochondrion-targeting transit peptide spans 1–50; that stretch reads MLRPGAQLLRGLLLRSCPLQGSPGRPRSVCGREGEEKPPLSAETQWKDRA. Residues 20–42 form a disordered region; that stretch reads QGSPGRPRSVCGREGEEKPPLSA. FAD-binding positions include 59-60, 80-81, and 87-95; these read CV, EK, and GSTWHAAGL. H91 carries the tele-8alpha-FAD histidine modification. Residue K114 is modified to N6-acetyllysine. Position 148 is an N6-acetyllysine; alternate (K148). K148 is subject to N6-succinyllysine; alternate. K168 is subject to N6-acetyllysine. V219 contributes to the FAD binding site. At K223 the chain carries N6-acetyllysine. W251 is an FAD binding site. 2 positions are modified to N6-succinyllysine: K317 and K319. 2 positions are modified to N6-acetyllysine: K335 and K360. Residue 397 to 402 participates in FAD binding; it reads FGYGII. K434 and K523 each carry N6-acetyllysine; alternate. 2 positions are modified to N6-succinyllysine; alternate: K434 and K523. 580–582 provides a ligand contact to (6S)-5,6,7,8-tetrahydrofolate; it reads ELT. An N6-acetyllysine; alternate modification is found at K655. K655 is subject to N6-succinyllysine; alternate. (6S)-5,6,7,8-tetrahydrofolate-binding positions include Y676, 683 to 685, and Y744; that span reads ELY. The residue at position 764 (K764) is an N6-acetyllysine. Residue K795 is modified to N6-succinyllysine.

It belongs to the GcvT family. As to quaternary structure, monomer. FAD serves as cofactor.

The protein resides in the mitochondrion. It catalyses the reaction (6S)-5,6,7,8-tetrahydrofolyl-(gamma-L-Glu)(n) + N,N-dimethylglycine + oxidized [electron-transfer flavoprotein] + H(+) = (6R)-5,10-methylenetetrahydrofolyl-(gamma-L-Glu)(n) + sarcosine + reduced [electron-transfer flavoprotein]. Its pathway is amine and polyamine degradation; betaine degradation; sarcosine from betaine: step 2/2. In terms of biological role, catalyzes the demethylation of N,N-dimethylglycine to sarcosine. Also has activity with sarcosine in vitro. The protein is Dimethylglycine dehydrogenase, mitochondrial (DMGDH) of Homo sapiens (Human).